The sequence spans 606 residues: V-type proton ATPase catalytic subunit A (606 aa).

239-246 (GAFGCGKT) is a binding site for ATP.

It belongs to the ATPase alpha/beta chains family. V-ATPase is a heteromultimeric enzyme made up of two complexes: the ATP-hydrolytic V1 complex and the proton translocation V0 complex. The V1 complex consists of three catalytic AB heterodimers that form a heterohexamer, three peripheral stalks each consisting of EG heterodimers, one central rotor including subunits D and F, and the regulatory subunits C and H. The proton translocation complex V0 consists of the proton transport subunit a, a ring of proteolipid subunits c9c'', rotary subunit d, subunits e and f, and the accessory subunits vah-19/Ac45 and vah-20/PRR.

The catalysed reaction is ATP + H2O + 4 H(+)(in) = ADP + phosphate + 5 H(+)(out). Functionally, catalytic subunit of the V1 complex of vacuolar(H+)-ATPase (V-ATPase), a multisubunit enzyme composed of a peripheral complex (V1) that hydrolyzes ATP and a membrane integral complex (V0) that translocates protons. V-ATPase is responsible for acidifying and maintaining the pH of intracellular compartments and in some cell types, is targeted to the plasma membrane, where it is responsible for acidifying the extracellular environment. Required along with other vacuolar ATPase components for the removal of protein aggregates which form in immature oocytes in the distal gonad. This removal occurs as the oocytes mature and move to the proximal gonad, is triggered by the introduction of sperm through mating and occurs before fertilization. The introduction of sperm triggers V-ATPase accumulation in proximal oocytes and induces lysosomal acidification which leads to engulfing of protein aggregates by lysosomes and subsequent clearance of the aggregates. Lysosomal acidification also leads to changes in mitochondrial morphology and function. Mitochondria in distal immature oocytes are fragmented, produce high levels of reactive oxygen species (ROS) and have high membrane potential, indicative of metabolic inactivity. In contrast, mitochondria in proximal mature oocytes are tubular with lower ROS levels and membrane potential, indicative of an active metabolic state required for aggregate mobilization before clearance. Involved in receptor-mediated endocytosis. The polypeptide is V-type proton ATPase catalytic subunit A (Caenorhabditis briggsae).